A 102-amino-acid polypeptide reads, in one-letter code: MSDQATTLKIKPLGDRILVKREEEASTARGGIILPDTAKKKQDRAEVVALGTGKKDDKGQQLPFEVQVGDIVLIDKYSGQELTVEGEEYVIVQMSEVIAVLQ.

It belongs to the GroES chaperonin family. As to quaternary structure, heptamer of 7 subunits arranged in a ring. Interacts with the chaperonin GroEL.

It localises to the cytoplasm. Functionally, together with the chaperonin GroEL, plays an essential role in assisting protein folding. The GroEL-GroES system forms a nano-cage that allows encapsulation of the non-native substrate proteins and provides a physical environment optimized to promote and accelerate protein folding. GroES binds to the apical surface of the GroEL ring, thereby capping the opening of the GroEL channel. This is Co-chaperonin GroES from Chlamydia trachomatis serovar L2 (strain ATCC VR-902B / DSM 19102 / 434/Bu).